The primary structure comprises 147 residues: uncharacterized protein (147 aa).

The HTH marR-type domain maps to 1-137; the sequence is MRDNTIGSLI…LYELMTKVHK (137 aa). The H-T-H motif DNA-binding region spans 53–76; it reads QMELAEKVTVTQGGISRMLTRLEK.

This is an uncharacterized protein from Bacillus anthracis.